The chain runs to 956 residues: Zinc protease PQQL-like (956 aa).

An N-acetylmethionine modification is found at Met1. His85 serves as a coordination point for Zn(2+). Glu88 functions as the Proton acceptor in the catalytic mechanism. Zn(2+) is bound at residue His89. The active site involves Glu165. Glu172 serves as a coordination point for Zn(2+).

This sequence belongs to the peptidase M16 family. The cofactor is Zn(2+).

This chain is Zinc protease PQQL-like, found in Arabidopsis thaliana (Mouse-ear cress).